A 135-amino-acid chain; its full sequence is ATP synthase epsilon chain (135 aa).

This sequence belongs to the ATPase epsilon chain family. F-type ATPases have 2 components, CF(1) - the catalytic core - and CF(0) - the membrane proton channel. CF(1) has five subunits: alpha(3), beta(3), gamma(1), delta(1), epsilon(1). CF(0) has three main subunits: a, b and c.

It localises to the cell inner membrane. Produces ATP from ADP in the presence of a proton gradient across the membrane. In Hyphomonas neptunium (strain ATCC 15444), this protein is ATP synthase epsilon chain.